Consider the following 899-residue polypeptide: Probable dipeptidyl-aminopeptidase B (899 aa).

A disordered region spans residues 1–69 (MKLDRMRVGS…NHNGRTQGNY (69 aa)). Residues 1-99 (MKLDRMRVGS…NGKSSQRRTL (99 aa)) are Cytoplasmic-facing. The span at 32 to 43 (DSSSTASISLTL) shows a compositional bias: low complexity. The chain crosses the membrane as a helical; Signal-anchor for type II membrane protein span at residues 100–120 (IVFWLLVALCVGGWAVAFLFF). The Vacuolar portion of the chain corresponds to 121 to 899 (VTSPGNKTST…KYFNLSFLGH (779 aa)). Polar residues predominate over residues 128–139 (TSTSPHSGSNSP). Positions 128-149 (TSTSPHSGSNSPEGDVTKPGIP) are disordered. N-linked (GlcNAc...) asparagine glycosylation is found at asparagine 212, asparagine 308, and asparagine 360. Residue serine 765 is the Charge relay system of the active site. Residues asparagine 819, asparagine 824, and asparagine 827 are each glycosylated (N-linked (GlcNAc...) asparagine). Catalysis depends on charge relay system residues aspartate 842 and histidine 875. N-linked (GlcNAc...) asparagine glycosylation occurs at asparagine 893.

Belongs to the peptidase S9B family.

It is found in the vacuole membrane. It carries out the reaction Release of an N-terminal dipeptide, Xaa-Yaa-|-Zaa-, from a polypeptide, preferentially when Yaa is Pro, provided Zaa is neither Pro nor hydroxyproline.. Functionally, type IV dipeptidyl-peptidase which removes N-terminal dipeptides sequentially from polypeptides having unsubstituted N-termini provided that the penultimate residue is proline. In Trichophyton verrucosum (strain HKI 0517), this protein is Probable dipeptidyl-aminopeptidase B (DAPB).